Reading from the N-terminus, the 347-residue chain is Selenide, water dikinase (347 aa).

Cys17 is an active-site residue. ATP is bound by residues Lys20 and 48-50 (TRD). Asp51 lines the Mg(2+) pocket. ATP-binding positions include Asp68, Asp91, and 139-141 (GHS). Asp91 contributes to the Mg(2+) binding site. Asp227 serves as a coordination point for Mg(2+).

This sequence belongs to the selenophosphate synthase 1 family. Class I subfamily. In terms of assembly, homodimer. The cofactor is Mg(2+).

It catalyses the reaction hydrogenselenide + ATP + H2O = selenophosphate + AMP + phosphate + 2 H(+). Synthesizes selenophosphate from selenide and ATP. The sequence is that of Selenide, water dikinase from Salmonella typhi.